We begin with the raw amino-acid sequence, 864 residues long: MHERYVPADVEAAAQGDWRAADAYKTQEDAQKPKFYCVSMLPYPSGKLHMGHVRNYTINDVMYRYLRMNGYNVLMPMGWDAFGMPAENAAMANGVPPAKWTYDNIDYMKGQMQSMGLAIDWSREIATCKPDYYKWNQWLFLKMLEKGIAYKKTGTVNWDPVDQTVLANEQVIDGRGWRSGALVEKREIPMYYLRITQYADELLNDLDGLGWPERVKIMQQNWIGKSFGVNFGFPYELDGEKQLLRVFTTRADTIMGVTFCAIAAEHPLATRLAQGKPELQAFIDECKRGGVAEADMATMEKKGVATGFSVTHPLTGEPVEVWIGNYVLMSYGEGAVMGVPGHDERDFAFAKKYGLPIKQVIAAEGHTYSLDAWQEWYGDKDIAVCINSGKYDGLGYAAAVDAVAADLKAGGFGDKQVTWRLRDWGISRQRYWGTPIPIIHCPSCGDVPVPEKDLPVVLPEDLVPDGSGNPLAKSEAFLNCTCPKCGAAAKRETDTMDTFVDSSWYFSRYTAPDAETMVDARTDYWMPMDQYIGGIEHAILHLLYSRFWTKVMRDLGLVKFGEPAKNLLTQGMVLNETYYREDAAGKKTWYNPADVTVTHDDKGRPVGATLNADGQPVVLGGIEKMSKSKNNGVDPQVLIDQYGADTARLFTMFAAPPEQQLEWSGAGVEGASRFLRRVWSFGYANREALASRAGFDAAALGDADKALRREIYSVLKQADFDYQRLQYNTVVSAAMKMLNAIDGAKGATPGVLREAYGVLLRVLYPVVPHVTYELWKALGYADEFGPLLDAPWPKVDEAALEQAEIELVLQVNGKVRGALKVAKDASREAIEAAALADDAFAKFGEGKPAKKIVVVPGRLVNIVV.

The 'HIGH' region signature appears at 42 to 52 (PYPSGKLHMGH). Residues 624 to 628 (KMSKS) carry the 'KMSKS' region motif. K627 is a binding site for ATP.

The protein belongs to the class-I aminoacyl-tRNA synthetase family.

The protein localises to the cytoplasm. It catalyses the reaction tRNA(Leu) + L-leucine + ATP = L-leucyl-tRNA(Leu) + AMP + diphosphate. In Burkholderia multivorans (strain ATCC 17616 / 249), this protein is Leucine--tRNA ligase.